The primary structure comprises 385 residues: GDSL esterase/lipase 5 (385 aa).

The signal sequence occupies residues 1-35 (MRESTLMEKVTRRTISSFIFFIVSSTILFLAGKSS). A glycan (N-linked (GlcNAc...) asparagine) is linked at Asn45. Ser55 (nucleophile) is an active-site residue. Residues Asn66, Asn194, Asn211, and Asn289 are each glycosylated (N-linked (GlcNAc...) asparagine). Residues Asp345 and His348 contribute to the active site.

Belongs to the 'GDSL' lipolytic enzyme family.

It localises to the secreted. The sequence is that of GDSL esterase/lipase 5 (GLIP5) from Arabidopsis thaliana (Mouse-ear cress).